A 198-amino-acid polypeptide reads, in one-letter code: Ribonuclease HII (198 aa).

The region spanning 10-198 is the RNase H type-2 domain; it reads QLVAGVDEVG…PVKRALGLAS (189 aa). Asp-16, Glu-17, and Asp-108 together coordinate a divalent metal cation.

Belongs to the RNase HII family. Mn(2+) serves as cofactor. It depends on Mg(2+) as a cofactor.

It is found in the cytoplasm. It carries out the reaction Endonucleolytic cleavage to 5'-phosphomonoester.. Its function is as follows. Endonuclease that specifically degrades the RNA of RNA-DNA hybrids. The sequence is that of Ribonuclease HII from Shigella sonnei (strain Ss046).